The sequence spans 177 residues: Nicotinamide-nucleotide adenylyltransferase (177 aa).

It belongs to the archaeal NMN adenylyltransferase family.

The protein localises to the cytoplasm. The catalysed reaction is beta-nicotinamide D-ribonucleotide + ATP + H(+) = diphosphate + NAD(+). It participates in cofactor biosynthesis; NAD(+) biosynthesis; NAD(+) from nicotinamide D-ribonucleotide: step 1/1. This Halobacterium salinarum (strain ATCC 29341 / DSM 671 / R1) protein is Nicotinamide-nucleotide adenylyltransferase.